A 1470-amino-acid polypeptide reads, in one-letter code: Histone acetyltransferase HAC4 (1470 aa).

Over residues 1 to 10 (MNNNKEVPQN) the composition is skewed to polar residues. 2 disordered regions span residues 1–20 (MNNN…SSSA) and 342–376 (TNFQ…HSQN). Positions 11 to 20 (SVAVSSSSSA) are enriched in low complexity. The segment covering 342 to 365 (TNFQSAPNNRDNLPQVSQQLSNHG) has biased composition (polar residues). Residues 416 to 495 (GQTSSNTVLR…SISCRTCVAV (80 aa)) form a TAZ-type 1 zinc finger. The tract at residues 518 to 566 (SSKCQPKKSSKSRQAYKKGGAEAPSVDADLQRSIKRPKLHRPSQNITPE) is disordered. Positions 522–533 (QPKKSSKSRQAY) are enriched in basic residues. The segment at 764 to 841 (HYVCAPCYNE…KYTCPSCYIQ (78 aa)) adopts a PHD-type zinc-finger fold. Residues 856–1293 (VPGATSLPVT…ILYHLHNPTA (438 aa)) form the CBP/p300-type HAT domain. Acetyl-CoA contacts are provided by residues 979–981 (LDS), 998–999 (RT), and Trp1054. 2 ZZ-type zinc fingers span residues 1175–1238 (HLQH…IKDV) and 1295–1347 (AFAT…SSTD). 16 residues coordinate Zn(2+): Cys1180, Cys1183, Cys1195, Cys1198, Cys1204, Cys1207, His1220, His1228, Cys1300, Cys1303, Cys1315, Cys1318, Cys1324, Cys1327, His1335, and His1337. The TAZ-type 2 zinc-finger motif lies at 1358–1436 (SQSYQVKLEK…KCTVPKCSGL (79 aa)).

Rosette leaves, stems and flowers.

The protein localises to the nucleus. It catalyses the reaction L-lysyl-[protein] + acetyl-CoA = N(6)-acetyl-L-lysyl-[protein] + CoA + H(+). Functionally, acetyltransferase enzyme. Acetylates histones, giving a specific tag for transcriptional activation. The sequence is that of Histone acetyltransferase HAC4 (HAC4) from Arabidopsis thaliana (Mouse-ear cress).